Consider the following 143-residue polypeptide: Histone H2AX (143 aa).

The segment at 1 to 22 (MSGRGKTGGKARAKAKSRSSRA) is disordered. Position 2 is an N-acetylserine (Ser2). Ser2 bears the Phosphoserine mark. An N6-acetyllysine mark is found at Lys6 and Lys10. The span at 7 to 19 (TGGKARAKAKSRS) shows a compositional bias: basic residues. An N6-lactoyllysine; alternate modification is found at Lys10. Glycyl lysine isopeptide (Lys-Gly) (interchain with G-Cter in ubiquitin) cross-links involve residues Lys14 and Lys16. Lys37 bears the N6-acetyllysine mark. Residue Lys120 forms a Glycyl lysine isopeptide (Lys-Gly) (interchain with G-Cter in ubiquitin) linkage. A disordered region spans residues 121 to 143 (TSATVGPKAPSGGKKATQASQEY). Ser122 is subject to Phosphoserine. Residues Lys128 and Lys135 each participate in a glycyl lysine isopeptide (Lys-Gly) (interchain with G-Cter in SUMO2) cross-link. Ser140 carries the post-translational modification Phosphoserine; by ATM, ATR and PRKDC. The [ST]-Q motif motif lies at 140–141 (SQ). Tyr143 is modified (phosphotyrosine; by WSTF).

It belongs to the histone H2A family. The nucleosome is a histone octamer containing two molecules each of H2A, H2B, H3 and H4 assembled in one H3-H4 heterotetramer and two H2A-H2B heterodimers. The octamer wraps approximately 147 bp of DNA. Interacts with numerous proteins required for DNA damage signaling and repair when phosphorylated on Ser-140. These include MDC1, TP53BP1, BRCA1 and the MRN complex, composed of MRE11, RAD50, and NBN. Interaction with the MRN complex is mediated at least in part by NBN. Also interacts with DHX9/NDHII when phosphorylated on Ser-140 and MCPH1 when phosphorylated at Ser-140 or Tyr-143. Interacts with ARRB2; the interaction is detected in the nucleus upon OR1D2 stimulation. Interacts with WRAP53/TCAB1. Interacts with HDGFL2. Interacts with DNA damage up-regulated protein DDUP. Forms a complex with DDUP and RAD18 following DDUP phosphorylation. As to quaternary structure, (Microbial infection) Interacts with Epstein-Barr virus protein EBNA6. Phosphorylated by VRK1. Phosphorylated on Ser-140 (to form gamma-H2AX or H2AX139ph) in response to DNA double strand breaks (DSBs) generated by exogenous genotoxic agents and by stalled replication forks, and may also occur during meiotic recombination events and immunoglobulin class switching in lymphocytes. Phosphorylation can extend up to several thousand nucleosomes from the actual site of the DSB and may mark the surrounding chromatin for recruitment of proteins required for DNA damage signaling and repair. Widespread phosphorylation may also serve to amplify the damage signal or aid repair of persistent lesions. Phosphorylation of Ser-140 (H2AX139ph) in response to ionizing radiation is mediated by both ATM and PRKDC while defects in DNA replication induce Ser-140 phosphorylation (H2AX139ph) subsequent to activation of ATR and PRKDC. Dephosphorylation of Ser-140 by PP2A is required for DNA DSB repair. In meiosis, Ser-140 phosphorylation (H2AX139ph) may occur at synaptonemal complexes during leptotene as an ATM-dependent response to the formation of programmed DSBs by SPO11. Ser-140 phosphorylation (H2AX139ph) may subsequently occurs at unsynapsed regions of both autosomes and the XY bivalent during zygotene, downstream of ATR and BRCA1 activation. Ser-140 phosphorylation (H2AX139ph) may also be required for transcriptional repression of unsynapsed chromatin and meiotic sex chromosome inactivation (MSCI), whereby the X and Y chromosomes condense in pachytene to form the heterochromatic XY-body. During immunoglobulin class switch recombination in lymphocytes, Ser-140 phosphorylation (H2AX139ph) may occur at sites of DNA-recombination subsequent to activation of the activation-induced cytidine deaminase AICDA. Phosphorylation at Tyr-143 (H2AXY142ph) by BAZ1B/WSTF determines the relative recruitment of either DNA repair or pro-apoptotic factors. Phosphorylation at Tyr-143 (H2AXY142ph) favors the recruitment of APBB1/FE65 and pro-apoptosis factors such as MAPK8/JNK1, triggering apoptosis. In contrast, dephosphorylation of Tyr-143 by EYA proteins (EYA1, EYA2, EYA3 or EYA4) favors the recruitment of MDC1-containing DNA repair complexes to the tail of phosphorylated Ser-140 (H2AX139ph). In terms of processing, monoubiquitination of Lys-120 (H2AXK119ub) by RING1 and RNF2/RING2 complex gives a specific tag for epigenetic transcriptional repression. Following DNA double-strand breaks (DSBs), it is ubiquitinated through 'Lys-63' linkage of ubiquitin moieties by the E2 ligase UBE2N and the E3 ligases RNF8 and RNF168, leading to the recruitment of repair proteins to sites of DNA damage. Ubiquitination at Lys-14 and Lys-16 (H2AK13Ub and H2AK15Ub, respectively) in response to DNA damage is initiated by RNF168 that mediates monoubiquitination at these 2 sites, and 'Lys-63'-linked ubiquitin are then conjugated to monoubiquitin; RNF8 is able to extend 'Lys-63'-linked ubiquitin chains in vitro. H2AK119Ub and ionizing radiation-induced 'Lys-63'-linked ubiquitination (H2AK13Ub and H2AK15Ub) are distinct events. Post-translationally, acetylation at Lys-6 (H2AXK5ac) by KAT5 component of the NuA4 histone acetyltransferase complex promotes NBN/NBS1 assembly at the sites of DNA damage. Acetylation at Lys-37 increases in S and G2 phases. This modification has been proposed to play a role in DNA double-strand break repair.

The protein resides in the nucleus. It localises to the chromosome. In terms of biological role, variant histone H2A which replaces conventional H2A in a subset of nucleosomes. Nucleosomes wrap and compact DNA into chromatin, limiting DNA accessibility to the cellular machineries which require DNA as a template. Histones thereby play a central role in transcription regulation, DNA repair, DNA replication and chromosomal stability. DNA accessibility is regulated via a complex set of post-translational modifications of histones, also called histone code, and nucleosome remodeling. Required for checkpoint-mediated arrest of cell cycle progression in response to low doses of ionizing radiation and for efficient repair of DNA double strand breaks (DSBs) specifically when modified by C-terminal phosphorylation. The sequence is that of Histone H2AX from Homo sapiens (Human).